A 177-amino-acid polypeptide reads, in one-letter code: Hypoxanthine phosphoribosyltransferase (177 aa).

Diphosphate-binding residues include Arg43 and Gly44. Glu99 is a binding site for GMP. Glu99 serves as a coordination point for IMP. Mg(2+)-binding residues include Glu99 and Asp100. Residue Asp103 is the Proton acceptor of the active site. GMP-binding positions include Asp103 to Leu108, Lys131, and Asp159. IMP-binding positions include Asp103–Leu108 and Lys131. Residue Arg165 participates in diphosphate binding.

It belongs to the purine/pyrimidine phosphoribosyltransferase family. As to quaternary structure, homotetramer. Mg(2+) is required as a cofactor.

The protein localises to the cytoplasm. It carries out the reaction IMP + diphosphate = hypoxanthine + 5-phospho-alpha-D-ribose 1-diphosphate. It catalyses the reaction GMP + diphosphate = guanine + 5-phospho-alpha-D-ribose 1-diphosphate. The protein operates within purine metabolism; IMP biosynthesis via salvage pathway; IMP from hypoxanthine: step 1/1. In terms of biological role, purine salvage pathway enzyme which catalyzes the transfer of the ribosyl-5-phosphate group from 5-phospho-alpha-D-ribose 1-diphosphate (PRPP) to the N9 position of hypoxanthine to yield IMP (inosine 5'-monophosphate). To a lesser extent, can also act on guanine leading to GMP, but shows a highly less efficient activity with xanthine. The chain is Hypoxanthine phosphoribosyltransferase (hpt) from Buchnera aphidicola subsp. Schizaphis graminum (strain Sg).